The primary structure comprises 171 residues: Cytochrome c oxidase subunit 4 isoform 2, mitochondrial (171 aa).

The transit peptide at 1–28 directs the protein to the mitochondrion; it reads MLPRAAWSLVLRKGGGGRRGMHSSEGTT. A disordered region spans residues 13–32; that stretch reads KGGGGRRGMHSSEGTTRGGG. Over 29–100 the chain is Mitochondrial matrix; it reads RGGGKMSPYT…TFAEMNRRSN (72 aa). Residues 101 to 126 traverse the membrane as a helical segment; it reads EWKTVMGCVFFFIGFAALVIWWQRVY. Residues 127-171 lie on the Mitochondrial intermembrane side of the membrane; the sequence is VFPPKPITLTDERKAQQLQRMLDMKVNPVQGLASRWDYEKKQWKK.

This sequence belongs to the cytochrome c oxidase IV family. In terms of assembly, component of the cytochrome c oxidase (complex IV, CIV), a multisubunit enzyme composed of 14 subunits. The complex is composed of a catalytic core of 3 subunits MT-CO1, MT-CO2 and MT-CO3, encoded in the mitochondrial DNA, and 11 supernumerary subunits COX4I1 (or COX4I2), COX5A, COX5B, COX6A1 (or COX6A2), COX6B1 (or COX6B2), COX6C, COX7A2 (or COX7A1), COX7B, COX7C, COX8A and NDUFA4, which are encoded in the nuclear genome. The complex exists as a monomer or a dimer and forms supercomplexes (SCs) in the inner mitochondrial membrane with NADH-ubiquinone oxidoreductase (complex I, CI) and ubiquinol-cytochrome c oxidoreductase (cytochrome b-c1 complex, complex III, CIII), resulting in different assemblies (supercomplex SCI(1)III(2)IV(1) and megacomplex MCI(2)III(2)IV(2)). As to expression, highly expressed in lung.

The protein localises to the mitochondrion inner membrane. The protein operates within energy metabolism; oxidative phosphorylation. In terms of biological role, component of the cytochrome c oxidase, the last enzyme in the mitochondrial electron transport chain which drives oxidative phosphorylation. The respiratory chain contains 3 multisubunit complexes succinate dehydrogenase (complex II, CII), ubiquinol-cytochrome c oxidoreductase (cytochrome b-c1 complex, complex III, CIII) and cytochrome c oxidase (complex IV, CIV), that cooperate to transfer electrons derived from NADH and succinate to molecular oxygen, creating an electrochemical gradient over the inner membrane that drives transmembrane transport and the ATP synthase. Cytochrome c oxidase is the component of the respiratory chain that catalyzes the reduction of oxygen to water. Electrons originating from reduced cytochrome c in the intermembrane space (IMS) are transferred via the dinuclear copper A center (CU(A)) of subunit 2 and heme A of subunit 1 to the active site in subunit 1, a binuclear center (BNC) formed by heme A3 and copper B (CU(B)). The BNC reduces molecular oxygen to 2 water molecules using 4 electrons from cytochrome c in the IMS and 4 protons from the mitochondrial matrix. In Homo sapiens (Human), this protein is Cytochrome c oxidase subunit 4 isoform 2, mitochondrial.